We begin with the raw amino-acid sequence, 276 residues long: Undecaprenyl-diphosphatase (276 aa).

6 helical membrane-spanning segments follow: residues 43-63, 85-105, 109-129, 183-203, 218-238, and 254-274; these read RAMAFNIIIQLGAILAVVWEF, LNLLIAFMPAVVLGVIFADTI, LFNAITVATALVIGGVIMLWA, AATEFSFFLAMPTMVGAAVYS, VFAIGFVTSFIFAMIAVRGLL, and IAFGLLILATWQFGWIDWASA.

It belongs to the UppP family.

The protein resides in the cell inner membrane. The catalysed reaction is di-trans,octa-cis-undecaprenyl diphosphate + H2O = di-trans,octa-cis-undecaprenyl phosphate + phosphate + H(+). Its function is as follows. Catalyzes the dephosphorylation of undecaprenyl diphosphate (UPP). Confers resistance to bacitracin. This chain is Undecaprenyl-diphosphatase, found in Pseudomonas syringae pv. syringae (strain B728a).